We begin with the raw amino-acid sequence, 442 residues long: Large ribosomal subunit protein mL65 (442 aa).

Belongs to the mitochondrion-specific ribosomal protein mL65 family. As to quaternary structure, component of the mitochondrial ribosome small subunit (28S) which comprises a 12S rRNA and about 30 distinct proteins.

It is found in the mitochondrion. In Mus musculus (Mouse), this protein is Large ribosomal subunit protein mL65 (Mrps30).